A 238-amino-acid polypeptide reads, in one-letter code: Androgen-induced gene 1 protein (238 aa).

The Cytoplasmic portion of the chain corresponds to 1 to 12 (MALVPCQVLRMA). Residues 13 to 30 (ILLSYCSILCNYKAIEMP) traverse the membrane as a helical segment. Over 31–44 (SHQTYGGSWKFLTF) the chain is Extracellular. A helical membrane pass occupies residues 45-67 (IDLVIQAVFFGICVLTDLSSLLT). Topologically, residues 68 to 87 (RGSGNQEQERQLKKLISLRD) are cytoplasmic. A helical transmembrane segment spans residues 88 to 110 (WMLAVLAFPVGVFVVAVFWIIYA). Residues 111–124 (YDREMIYPKLLDNF) are Extracellular-facing. The chain crosses the membrane as a helical span at residues 125 to 144 (IPGWLNHGMHTTVLPFILIE). The Cytoplasmic segment spans residues 145–156 (MRTSHHQYPSRS). The helical transmembrane segment at 157-179 (SGLTAICTFSVGYILWVCWVHHV) threads the bilayer. The Extracellular portion of the chain corresponds to 180 to 193 (TGMWVYPFLEHIGP). Residues 194-216 (GARIIFFGSTTILMNFLYLLGEV) traverse the membrane as a helical segment. Residues 217–238 (LNNYIWDTQKSMEEEKEKPKLE) lie on the Cytoplasmic side of the membrane.

Belongs to the AIG1 family. Highly expressed in heart, ovary, testis, liver, and kidney, at lower levels in spleen, prostate, brain, skeletal muscle, pancreas, small intestine and colon, and undetected in peripheral blood leukocytes, thymus, lung and placenta. AIG1 expression is higher in hair follicles from males than from females.

It localises to the cell membrane. The enzyme catalyses 9-hexadecanoyloxy-octadecanoate + H2O = 9-hydroxy-octadecanoate + hexadecanoate + H(+). It catalyses the reaction 12-hexadecanoyloxy-octadecanoate + H2O = 12-hydroxyoctadecanoate + hexadecanoate + H(+). It carries out the reaction 9-(9Z-hexadecenoyloxy)-octadecanoate + H2O = (9Z)-hexadecenoate + 9-hydroxy-octadecanoate + H(+). The catalysed reaction is 12-(9Z-hexadecenoyloxy)-octadecanoate + H2O = 12-hydroxyoctadecanoate + (9Z)-hexadecenoate + H(+). The enzyme catalyses 13-(9Z-hexadecenoyloxy)-octadecanoate + H2O = 13-hydroxy-octadecanoate + (9Z)-hexadecenoate + H(+). It catalyses the reaction 9-octadecanoyloxy-octadecanoate + H2O = 9-hydroxy-octadecanoate + octadecanoate + H(+). It carries out the reaction 12-octadecanoyloxy-octadecanoate + H2O = 12-hydroxyoctadecanoate + octadecanoate + H(+). The catalysed reaction is 13-octadecanoyloxy-octadecanoate + H2O = 13-hydroxy-octadecanoate + octadecanoate + H(+). The enzyme catalyses 9-(9Z-octadecenoyloxy)-octadecanoate + H2O = 9-hydroxy-octadecanoate + (9Z)-octadecenoate + H(+). It catalyses the reaction 12-(9Z-octadecenoyloxy)-octadecanoate + H2O = 12-hydroxyoctadecanoate + (9Z)-octadecenoate + H(+). It carries out the reaction 13-(9Z-octadecenoyloxy)-octadecanoate + H2O = 13-hydroxy-octadecanoate + (9Z)-octadecenoate + H(+). The catalysed reaction is 5-(9Z-hexadecenoyloxy)-octadecanoate + H2O = 5-hydroxy-octadecanoate + (9Z)-hexadecenoate + H(+). Its activity is regulated as follows. Inhibited by N-hydroxyhydantoin carbamate JJH260 and beta-lactone KC01. Its function is as follows. Hydrolyzes bioactive fatty-acid esters of hydroxy-fatty acids (FAHFAs), but not other major classes of lipids. Show a preference for FAHFAs with branching distal from the carboxylate head group of the lipids. This is Androgen-induced gene 1 protein (AIG1) from Homo sapiens (Human).